The chain runs to 99 residues: Small integral membrane protein 9 (99 aa).

A signal peptide spans 1–26 (MEPQKLLIIGFLLCSLTCLLLETVAS). Topologically, residues 27–73 (SPLPLSALGIQEKTGSKPRSGGNHRSWLNNFRDYLWQLIKSALPPAA) are extracellular. A helical transmembrane segment spans residues 74–94 (IVAFLLTSALMGILCCFTILV). Residues 95 to 99 (VDPVH) are Cytoplasmic-facing.

The protein resides in the cell membrane. The protein is Small integral membrane protein 9 (SMIM9) of Homo sapiens (Human).